The chain runs to 43 residues: Potassium channel toxin gamma-KTx 4.6 (43 aa).

Intrachain disulfides connect Cys-5-Cys-23, Cys-11-Cys-34, Cys-20-Cys-39, and Cys-24-Cys-41.

This sequence belongs to the ergtoxin family. Gamma-KTx 4 subfamily. In terms of tissue distribution, expressed by the venom gland.

The protein resides in the secreted. Reversibly blocks Kv11/ERG potassium channels. The sequence is that of Potassium channel toxin gamma-KTx 4.6 from Centruroides limpidus (Mexican scorpion).